Consider the following 35-residue polypeptide: GFGCPNDYPCHRHCKSIPGRYGGYCGGXHRLRCTC.

3 disulfides stabilise this stretch: Cys-4-Cys-25, Cys-10-Cys-33, and Cys-14-Cys-35.

The protein resides in the secreted. Functionally, has antibacterial activity against M.luteus and E.coli. The chain is Defensin-B from Mytilus edulis (Blue mussel).